Here is a 396-residue protein sequence, read N- to C-terminus: Protein btn1 (396 aa).

Transmembrane regions (helical) follow at residues 15–35 (CFLI…SAAL), 45–65 (GVVL…ASIL), 76–96 (IGFC…SSSV), 138–158 (LAGL…NFSV), 161–181 (TLII…FVLP), 234–254 (FLVY…LLFP), 296–316 (LAIT…LYLT), and 321–341 (FVLF…VNVY).

This sequence belongs to the battenin family.

It localises to the endoplasmic reticulum membrane. The protein resides in the vacuole membrane. Its function is as follows. Involved in vacuolar transport and vacuole pH homeostasis. Also required for cytokinesis. This Schizosaccharomyces pombe (strain 972 / ATCC 24843) (Fission yeast) protein is Protein btn1.